The following is a 504-amino-acid chain: Plasma protease C1 inhibitor (504 aa).

The signal sequence occupies residues 1–22 (MASRLTPLTLLLLLLAGDRAFS). Residues 22 to 67 (SDPEATSHSTQDPLEAQAKSRESFPERDDSWSPPEPTVLPSTWPTT) are disordered. Positions 39–51 (AKSRESFPERDDS) are enriched in basic and acidic residues. Residues Asn-75, Asn-83, and Asn-107 are each glycosylated (N-linked (GlcNAc...) asparagine). A compositionally biased stretch (polar residues) spans 85–124 (SFSQHSQPAAQLPTDSPGQPPLNSSSQPSTASDLPTQATT). The tract at residues 85–141 (SFSQHSQPAAQLPTDSPGQPPLNSSSQPSTASDLPTQATTEPFCPEPLAQCSDSDRD) is disordered. Cystine bridges form between Cys-128–Cys-432 and Cys-135–Cys-210. Residues Asn-243 and Asn-356 are each glycosylated (N-linked (GlcNAc...) asparagine).

It belongs to the serpin family. As to quaternary structure, interacts with MASP1.

The protein resides in the secreted. Serine protease inhibitor, which acrs as a regulator of the classical complement pathway. Forms a proteolytically inactive stoichiometric complex with the C1r or C1s proteases. May also regulate blood coagulation, fibrinolysis and the generation of kinins. Very efficient inhibitor of FXIIa. Inhibits chymotrypsin and kallikrein. In Mus musculus (Mouse), this protein is Plasma protease C1 inhibitor (Serping1).